The primary structure comprises 155 residues: Ribonuclease 2B (155 aa).

The N-terminal stretch at 1 to 25 is a signal peptide; sequence MGLKLLESRLCLLLLLGLVLTLVSC. Histidine 38 acts as the Proton acceptor in catalysis. 4 cysteine pairs are disulfide-bonded: cysteine 47-cysteine 106, cysteine 61-cysteine 118, cysteine 79-cysteine 133, and cysteine 86-cysteine 94. 62-66 serves as a coordination point for substrate; sequence KDLNT. N-linked (GlcNAc...) asparagine glycosylation is present at asparagine 114. Histidine 150 acts as the Proton donor in catalysis.

The protein belongs to the pancreatic ribonuclease family.

The enzyme catalyses an [RNA] containing cytidine + H2O = an [RNA]-3'-cytidine-3'-phosphate + a 5'-hydroxy-ribonucleotide-3'-[RNA].. It carries out the reaction an [RNA] containing uridine + H2O = an [RNA]-3'-uridine-3'-phosphate + a 5'-hydroxy-ribonucleotide-3'-[RNA].. Functionally, this is a non-secretory ribonuclease. It is a pyrimidine specific nuclease with a slight preference for U. Cytotoxin and helminthotoxin. Possesses a wide variety of biological activities. In Mus musculus (Mouse), this protein is Ribonuclease 2B.